A 292-amino-acid polypeptide reads, in one-letter code: tRNA pseudouridine synthase B (292 aa).

Asp-38 (nucleophile) is an active-site residue.

The protein belongs to the pseudouridine synthase TruB family. Type 1 subfamily.

It carries out the reaction uridine(55) in tRNA = pseudouridine(55) in tRNA. Responsible for synthesis of pseudouridine from uracil-55 in the psi GC loop of transfer RNAs. In Streptococcus pneumoniae serotype 4 (strain ATCC BAA-334 / TIGR4), this protein is tRNA pseudouridine synthase B.